A 456-amino-acid polypeptide reads, in one-letter code: Bifunctional protein GlmU (456 aa).

The pyrophosphorylase stretch occupies residues 1–229 (MLNVVILAAG…GWETLGVNSR (229 aa)). UDP-N-acetyl-alpha-D-glucosamine-binding positions include 7–10 (LAAG), Lys-21, Gln-73, 78–79 (GT), 103–105 (YGD), Gly-139, Glu-154, Asn-169, and Asn-227. Asp-105 serves as a coordination point for Mg(2+). Asn-227 contributes to the Mg(2+) binding site. A linker region spans residues 230–250 (VQQAELERRWQQEQARRQLEA). The interval 251 to 456 (GVTLADPARF…EGWQRPQKKS (206 aa)) is N-acetyltransferase. 2 residues coordinate UDP-N-acetyl-alpha-D-glucosamine: Arg-333 and Lys-351. The active-site Proton acceptor is His-363. Positions 366 and 377 each coordinate UDP-N-acetyl-alpha-D-glucosamine. Residues Ala-380, 386–387 (NY), Ser-405, Ala-423, and Arg-440 contribute to the acetyl-CoA site.

In the N-terminal section; belongs to the N-acetylglucosamine-1-phosphate uridyltransferase family. It in the C-terminal section; belongs to the transferase hexapeptide repeat family. As to quaternary structure, homotrimer. Mg(2+) serves as cofactor.

It localises to the cytoplasm. It catalyses the reaction alpha-D-glucosamine 1-phosphate + acetyl-CoA = N-acetyl-alpha-D-glucosamine 1-phosphate + CoA + H(+). The catalysed reaction is N-acetyl-alpha-D-glucosamine 1-phosphate + UTP + H(+) = UDP-N-acetyl-alpha-D-glucosamine + diphosphate. It participates in nucleotide-sugar biosynthesis; UDP-N-acetyl-alpha-D-glucosamine biosynthesis; N-acetyl-alpha-D-glucosamine 1-phosphate from alpha-D-glucosamine 6-phosphate (route II): step 2/2. The protein operates within nucleotide-sugar biosynthesis; UDP-N-acetyl-alpha-D-glucosamine biosynthesis; UDP-N-acetyl-alpha-D-glucosamine from N-acetyl-alpha-D-glucosamine 1-phosphate: step 1/1. It functions in the pathway bacterial outer membrane biogenesis; LPS lipid A biosynthesis. In terms of biological role, catalyzes the last two sequential reactions in the de novo biosynthetic pathway for UDP-N-acetylglucosamine (UDP-GlcNAc). The C-terminal domain catalyzes the transfer of acetyl group from acetyl coenzyme A to glucosamine-1-phosphate (GlcN-1-P) to produce N-acetylglucosamine-1-phosphate (GlcNAc-1-P), which is converted into UDP-GlcNAc by the transfer of uridine 5-monophosphate (from uridine 5-triphosphate), a reaction catalyzed by the N-terminal domain. In Bordetella petrii (strain ATCC BAA-461 / DSM 12804 / CCUG 43448), this protein is Bifunctional protein GlmU.